Consider the following 349-residue polypeptide: Phosphoribosylformylglycinamidine cyclo-ligase (349 aa).

Belongs to the AIR synthase family.

The protein localises to the cytoplasm. It catalyses the reaction 2-formamido-N(1)-(5-O-phospho-beta-D-ribosyl)acetamidine + ATP = 5-amino-1-(5-phospho-beta-D-ribosyl)imidazole + ADP + phosphate + H(+). It participates in purine metabolism; IMP biosynthesis via de novo pathway; 5-amino-1-(5-phospho-D-ribosyl)imidazole from N(2)-formyl-N(1)-(5-phospho-D-ribosyl)glycinamide: step 2/2. The protein is Phosphoribosylformylglycinamidine cyclo-ligase of Albidiferax ferrireducens (strain ATCC BAA-621 / DSM 15236 / T118) (Rhodoferax ferrireducens).